The primary structure comprises 198 residues: Na(+)-translocating NADH-quinone reductase subunit E (198 aa).

Transmembrane regions (helical) follow at residues 11 to 31 (SIFIENMALSFFLGMCTFLAV), 35 to 55 (VSTAFGLGIAVIVVLGIAVPA), 77 to 97 (FLNFITFIGVIAALVQILEMI), 110 to 130 (GIFLPLITVNCAIFGAVSFMV), 140 to 160 (VVYGIGAGTGWMLAIVALAGI), and 176 to 196 (LGITFISAGLMALGFMSFSGI).

The protein belongs to the NqrDE/RnfAE family. Composed of six subunits; NqrA, NqrB, NqrC, NqrD, NqrE and NqrF.

Its subcellular location is the cell inner membrane. It carries out the reaction a ubiquinone + n Na(+)(in) + NADH + H(+) = a ubiquinol + n Na(+)(out) + NAD(+). Its function is as follows. NQR complex catalyzes the reduction of ubiquinone-1 to ubiquinol by two successive reactions, coupled with the transport of Na(+) ions from the cytoplasm to the periplasm. NqrA to NqrE are probably involved in the second step, the conversion of ubisemiquinone to ubiquinol. This Glaesserella parasuis serovar 5 (strain SH0165) (Haemophilus parasuis) protein is Na(+)-translocating NADH-quinone reductase subunit E.